A 540-amino-acid chain; its full sequence is Bifunctional purine biosynthesis protein PurH (540 aa).

Residues 1-144 enclose the MGS-like domain; that stretch reads MKRALISVYD…KNYQDVGVVV (144 aa). Residues 204–224 form a disordered region; sequence ETAPERPIGADPGPQKPAAPS.

It belongs to the PurH family.

The enzyme catalyses (6R)-10-formyltetrahydrofolate + 5-amino-1-(5-phospho-beta-D-ribosyl)imidazole-4-carboxamide = 5-formamido-1-(5-phospho-D-ribosyl)imidazole-4-carboxamide + (6S)-5,6,7,8-tetrahydrofolate. The catalysed reaction is IMP + H2O = 5-formamido-1-(5-phospho-D-ribosyl)imidazole-4-carboxamide. The protein operates within purine metabolism; IMP biosynthesis via de novo pathway; 5-formamido-1-(5-phospho-D-ribosyl)imidazole-4-carboxamide from 5-amino-1-(5-phospho-D-ribosyl)imidazole-4-carboxamide (10-formyl THF route): step 1/1. Its pathway is purine metabolism; IMP biosynthesis via de novo pathway; IMP from 5-formamido-1-(5-phospho-D-ribosyl)imidazole-4-carboxamide: step 1/1. The chain is Bifunctional purine biosynthesis protein PurH from Symbiobacterium thermophilum (strain DSM 24528 / JCM 14929 / IAM 14863 / T).